The sequence spans 260 residues: Methyl-coenzyme M reductase I subunit gamma (260 aa).

R123 provides a ligand contact to coenzyme M.

Belongs to the methyl-coenzyme M reductase gamma subunit family. As to quaternary structure, MCR is a hexamer of two alpha, two beta, and two gamma chains, forming a dimer of heterotrimers. Coenzyme F430 serves as cofactor.

It localises to the cytoplasm. The enzyme catalyses coenzyme B + methyl-coenzyme M = methane + coenzyme M-coenzyme B heterodisulfide. Its pathway is one-carbon metabolism; methyl-coenzyme M reduction; methane from methyl-coenzyme M: step 1/1. Functionally, component of the methyl-coenzyme M reductase (MCR) I that catalyzes the reductive cleavage of methyl-coenzyme M (CoM-S-CH3 or 2-(methylthio)ethanesulfonate) using coenzyme B (CoB or 7-mercaptoheptanoylthreonine phosphate) as reductant which results in the production of methane and the mixed heterodisulfide of CoB and CoM (CoM-S-S-CoB). This is the final step in methanogenesis. The sequence is that of Methyl-coenzyme M reductase I subunit gamma (mcrG) from Methanocaldococcus jannaschii (strain ATCC 43067 / DSM 2661 / JAL-1 / JCM 10045 / NBRC 100440) (Methanococcus jannaschii).